The primary structure comprises 54 residues: Large ribosomal subunit protein eL37 (54 aa).

Residues Cys-20, Cys-23, Cys-35, and Cys-38 each coordinate Zn(2+). Residues 20 to 38 form a C4-type zinc finger; sequence CRRCGHHTYNVRTKRCSHC.

Belongs to the eukaryotic ribosomal protein eL37 family. Requires Zn(2+) as cofactor.

Its function is as follows. Binds to the 23S rRNA. This Thermoplasma volcanium (strain ATCC 51530 / DSM 4299 / JCM 9571 / NBRC 15438 / GSS1) protein is Large ribosomal subunit protein eL37 (rpl37e).